Here is a 475-residue protein sequence, read N- to C-terminus: FAD-dependent monooxygenase janM (475 aa).

The helical transmembrane segment at 8-24 (VIIVGGSIGGLTLAHCL) threads the bilayer. 3 residues coordinate FAD: glutamate 35, glycine 49, and arginine 108. N-linked (GlcNAc...) asparagine glycosylation occurs at asparagine 147. 2 residues coordinate FAD: aspartate 299 and alanine 312. Residues 432–451 (GWRFHAMLCILMLAILYTWV) form a helical membrane-spanning segment.

This sequence belongs to the paxM FAD-dependent monooxygenase family. It depends on FAD as a cofactor.

It localises to the membrane. It participates in secondary metabolite biosynthesis. In terms of biological role, FAD-dependent monooxygenase; part of the gene cluster that mediates the biosynthesis of the indole diterpenes janthitremanes such as shearinine K or shearinine A. The geranylgeranyl diphosphate (GGPP) synthase janG catalyzes the first step in janthitremane biosynthesis via conversion of farnesyl pyrophosphate and isopentyl pyrophosphate into geranylgeranyl pyrophosphate (GGPP). Condensation of indole-3-glycerol phosphate with GGPP by the prenyl transferase janC then forms 3-geranylgeranylindole (3-GGI). Epoxidation by the FAD-dependent monooxygenase janM leads to a epoxidized-GGI that is substrate of the terpene cyclase janB for cyclization to yield paspaline. Paspaline is subsequently converted to 13-desoxypaspaline by the cytochrome P450 monooxygenase janP, via beta-PC-M6 in a series of alpha-face oxidations. The cytochrome P450 monooxygenase janQ is proposed to carry out sequential beta-face oxidation steps at C-7 and C-13 of 13-desoxypaspaline to form paspalicine and paspalinine respectively. The indole diterpene prenyltransferase janD may then convert paspalinine into shearinine K which is substrate of janO and/or additional enzymes for oxidation and cyclization to generate shearinine A. This chain is FAD-dependent monooxygenase janM, found in Penicillium janthinellum (Penicillium vitale).